A 71-amino-acid polypeptide reads, in one-letter code: ATP synthase F(0) complex subunit e, mitochondrial (71 aa).

Position 34 is an N6-acetyllysine (K34). Position 68 is a phosphoserine (S68).

This sequence belongs to the ATPase e subunit family. As to quaternary structure, component of the ATP synthase complex composed at least of ATP5F1A/subunit alpha, ATP5F1B/subunit beta, ATP5MC1/subunit c (homooctomer), MT-ATP6/subunit a, MT-ATP8/subunit 8, ATP5ME/subunit e, ATP5MF/subunit f, ATP5MG/subunit g, ATP5MK/subunit k, ATP5MJ/subunit j, ATP5F1C/subunit gamma, ATP5F1D/subunit delta, ATP5F1E/subunit epsilon, ATP5PF/subunit F6, ATP5PB/subunit b, ATP5PD/subunit d, ATP5PO/subunit OSCP. ATP synthase complex consists of a soluble F(1) head domain (subunits alpha(3) and beta(3)) - the catalytic core - and a membrane F(0) domain - the membrane proton channel (subunits c, a, 8, e, f, g, k and j). These two domains are linked by a central stalk (subunits gamma, delta, and epsilon) rotating inside the F1 region and a stationary peripheral stalk (subunits F6, b, d, and OSCP).

It is found in the mitochondrion. The protein resides in the mitochondrion inner membrane. In terms of biological role, subunit e, of the mitochondrial membrane ATP synthase complex (F(1)F(0) ATP synthase or Complex V) that produces ATP from ADP in the presence of a proton gradient across the membrane which is generated by electron transport complexes of the respiratory chain. ATP synthase complex consist of a soluble F(1) head domain - the catalytic core - and a membrane F(1) domain - the membrane proton channel. These two domains are linked by a central stalk rotating inside the F(1) region and a stationary peripheral stalk. During catalysis, ATP synthesis in the catalytic domain of F(1) is coupled via a rotary mechanism of the central stalk subunits to proton translocation. In vivo, can only synthesize ATP although its ATP hydrolase activity can be activated artificially in vitro. Part of the complex F(0) domain. In Pongo abelii (Sumatran orangutan), this protein is ATP synthase F(0) complex subunit e, mitochondrial.